The following is a 1246-amino-acid chain: MASFPSPPLAAAAAAAPPRLAPGLPLAAAAVRRPSSLARRSSIALAAPANPLRCIHRRAVSPRLRRRTEAVGAASAAIGSLGEEREGCLSCFPRGRRRGRPGLARFAPCALPHTYGLSSLHSGLTGAKIRRRHVLHAAGPDEPHVASPTWSETALDKHYVDQPIGKEELEGFLNTPLPSHPKLVRGQLKNGLRYLILPNKVPANRFEAHMEVHVGSIDEEEDEQGIAHMIEHVAFLGSKKREKLLGTGARSNAYTDFHHTVFHIHSPTKTKEYGEDLLPSVLDALNEIAFHPKFSSSRVEKERRAILSELQMMNTIEYRVDCQLLQHLHSENKLSERFPIGLEEQIHKWDPDKIRRFHERWYYPANATLYLVGEINDIPRAIREIEAVFEHTLPEGEAAPMSTASPFGAMASLFAPKLPGGLAASLTGERSPAADKIKPVKRERQAIRPPVEHKWSLPGVAQDAKPPAIFQHELIQSFSINMFCKIPVNQVQTYKDLRSVLMKRIFLSALHFRINTRYKSSNPPFTSVELDHSDSGREGCTVTTLTVTAEPQNWRSAIKVAVHEVRRLKEFGVTMGEMTRYMDALIKDSEQLAMMIDSVPSVDNLDFIMESDALRHTVMDQLQGHESLLAVAETVTLEEVNTVGAEVLEFISDYGKPDAPLPAAIVACVPKKVHMDGVGETDFEIHPEEITDSIKAGLEEPIYPEPELEVPKELITQSELEDLKLQRKPSFASLSKEENVVKIFDDETGIAQRRLSNGISINYKITQNEARVGVMRLIVGGGRATEDSESKGSVIVGVRTLSEGGCVGNFSREQVELFCVNNLINCSLESNEEFIFMEFRFALRDNGMRAAFQLLHMVLEHNVWLEDAFDRATQLYLSYYRSIPKSLERSTAHKLMLAMLNHDERFVEPSPHSLQKLTLQSVKDAVMNQFVGDNMEVSIVGDFTEEEVESCVLDYLGTVSAPKSSKTQEHIEKISFLPFPSDLHFQQVYIKDTDERACAYIAGPAPNRWGFATEGNDLFNVIRSSSGDAQVSESANTDLTERKHNDVRSHSLFFGITLSLLAEIINSRLFTTVRDSMGLTYDVSFELNLFDKLDLGWYVIAVTSTPSKVHKAVDACKGVLRGLHSNKIVERELDRAKRTLLMKHEAETKTNAYWLGLLAHLQSSSVPRKEISCIKELTMLYESATIEDLYLAYEHLKVDESSLFACIGIAGAESGEETTDDELDMGLHGMGPIGGRGLSTMTRPTT.

A chloroplast-targeting transit peptide spans 1–136; it reads MASFPSPPLA…AKIRRRHVLH (136 aa). Histidine 228 contributes to the Zn(2+) binding site. Glutamate 231 functions as the Proton acceptor in the catalytic mechanism. Zn(2+) is bound at residue histidine 232. Glutamate 302 is a catalytic residue. Glutamate 309 provides a ligand contact to Zn(2+).

This sequence belongs to the peptidase M16 family. Zn(2+) is required as a cofactor. As to expression, widely expressed.

The protein localises to the plastid. Its subcellular location is the chloroplast stroma. Its function is as follows. Cleaves presequences (transit peptides) from chloroplastic protein precursors. Initially recognizes a precursor by binding to the C-terminus of its transit peptide and then removes the transit peptide in a single endoproteolytic step. In a next step, pursues the cleavage of transit peptide to a subfragment form. The chain is Stromal processing peptidase, chloroplastic from Oryza sativa subsp. indica (Rice).